The sequence spans 140 residues: Ribosome maturation factor RimP (140 aa).

Belongs to the RimP family.

It localises to the cytoplasm. Its function is as follows. Required for maturation of 30S ribosomal subunits. This chain is Ribosome maturation factor RimP, found in Campylobacter hominis (strain ATCC BAA-381 / DSM 21671 / CCUG 45161 / LMG 19568 / NCTC 13146 / CH001A).